Here is a 133-residue protein sequence, read N- to C-terminus: Alcohol dehydrogenase, 15 kDa subunit (133 aa).

The N-terminal stretch at 1-24 (MFRRIVPVLGLALGLGLASQAAMA) is a signal peptide. The disordered stretch occupies residues 23 to 43 (MAQEQSPPPPPAVQGTPGKDF). Position 25 is a pyrrolidone carboxylic acid (Gln25).

The alcohol dehydrogenase multicomponent enzyme system is composed of a dehydrogenase subunit I (AdhA), a cytochrome c subunit II (AdhB) and a subunit III (AdhS).

The protein localises to the cell membrane. Functionally, part of the alcohol dehydrogenase multicomponent enzyme system which is involved in the production of acetic acid and in the ethanol oxidase respiratory chain. Does not play an obligatory role for the alcohol dehydrogenase (ADH) activity. This chain is Alcohol dehydrogenase, 15 kDa subunit, found in Gluconobacter oxydans (strain 621H) (Gluconobacter suboxydans).